A 434-amino-acid chain; its full sequence is Nicotinate phosphoribosyltransferase (434 aa).

His-242 carries the post-translational modification Phosphohistidine; by autocatalysis.

It belongs to the NAPRTase family. Post-translationally, transiently phosphorylated on a His residue during the reaction cycle. Phosphorylation strongly increases the affinity for substrates and increases the rate of nicotinate D-ribonucleotide production. Dephosphorylation regenerates the low-affinity form of the enzyme, leading to product release.

The catalysed reaction is nicotinate + 5-phospho-alpha-D-ribose 1-diphosphate + ATP + H2O = nicotinate beta-D-ribonucleotide + ADP + phosphate + diphosphate. The protein operates within cofactor biosynthesis; NAD(+) biosynthesis; nicotinate D-ribonucleotide from nicotinate: step 1/1. Functionally, catalyzes the synthesis of beta-nicotinate D-ribonucleotide from nicotinate and 5-phospho-D-ribose 1-phosphate at the expense of ATP. This chain is Nicotinate phosphoribosyltransferase, found in Chelativorans sp. (strain BNC1).